A 204-amino-acid polypeptide reads, in one-letter code: MRWFKLWSILLVGSLLVSGTRGKLPDAPEFEKDLLIQRLNWMLWVIDECFRDLCYRTGICKGILEPAAIFHLKLPAINDTDHCGLIGFNETSCLKKLADGFFEFEVLFKFLTTEFGKSVINVDVMELLTKTLGWDIQEELNKLTKTHYSPPKFDRGLLGRLQGLKYWVRHFASFYVLSAMEKFAGQAVRVLNSIPDVTPDVHDK.

A signal peptide spans 1-22 (MRWFKLWSILLVGSLLVSGTRG).

The protein belongs to the IL-6 superfamily. As to quaternary structure, interacts with host IL6ST.

In terms of biological role, initiates signal transduction through binding to interleukin-6 receptor subunit beta IL6ST, independently of the cognate IL6 receptor IL6R. In infected primary effusion lymphoma cells, promotes proliferation of cells, protects them from apoptosis, and promotes immune evasion of interferon activity. Also drives blood to lymphatic endothelial cell differentiation. The chain is Viral interleukin-6 homolog (K2) from Homo sapiens (Human).